A 238-amino-acid chain; its full sequence is tRNA (guanine-N(7)-)-methyltransferase (238 aa).

The S-adenosyl-L-methionine site is built by E68, E93, D120, and D143. The active site involves D143. Substrate is bound by residues K147, D179, and 216 to 219 (TKFE).

This sequence belongs to the class I-like SAM-binding methyltransferase superfamily. TrmB family.

It carries out the reaction guanosine(46) in tRNA + S-adenosyl-L-methionine = N(7)-methylguanosine(46) in tRNA + S-adenosyl-L-homocysteine. It functions in the pathway tRNA modification; N(7)-methylguanine-tRNA biosynthesis. In terms of biological role, catalyzes the formation of N(7)-methylguanine at position 46 (m7G46) in tRNA. The protein is tRNA (guanine-N(7)-)-methyltransferase of Aliivibrio salmonicida (strain LFI1238) (Vibrio salmonicida (strain LFI1238)).